The chain runs to 136 residues: Small ribosomal subunit protein uS19 (136 aa).

Residues 114-136 form a disordered region; sequence RSRVSHGSAGVGATRSSKFVPLK.

Belongs to the universal ribosomal protein uS19 family.

In terms of biological role, protein S19 forms a complex with S13 that binds strongly to the 16S ribosomal RNA. The protein is Small ribosomal subunit protein uS19 of Methanosarcina barkeri (strain Fusaro / DSM 804).